A 204-amino-acid chain; its full sequence is Putative 3-methyladenine DNA glycosylase (204 aa).

This sequence belongs to the DNA glycosylase MPG family.

In Mycobacterium sp. (strain KMS), this protein is Putative 3-methyladenine DNA glycosylase.